The sequence spans 100 residues: Large ribosomal subunit protein uL23 (100 aa).

The protein belongs to the universal ribosomal protein uL23 family. As to quaternary structure, part of the 50S ribosomal subunit. Contacts protein L29, and trigger factor when it is bound to the ribosome.

One of the early assembly proteins it binds 23S rRNA. One of the proteins that surrounds the polypeptide exit tunnel on the outside of the ribosome. Forms the main docking site for trigger factor binding to the ribosome. In Shewanella piezotolerans (strain WP3 / JCM 13877), this protein is Large ribosomal subunit protein uL23.